An 86-amino-acid chain; its full sequence is Toxin CSTX-20 (86 aa).

As to expression, expressed by the venom gland.

It localises to the secreted. This Cupiennius salei (American wandering spider) protein is Toxin CSTX-20.